The following is a 327-amino-acid chain: Undecaprenyl-phosphate 4-deoxy-4-formamido-L-arabinose transferase (327 aa).

Residues M1 to L235 are Cytoplasmic-facing. The chain crosses the membrane as a helical span at residues L236–V256. Over L257–G269 the chain is Periplasmic. Residues V270–L290 traverse the membrane as a helical segment. Residues L291–Q327 lie on the Cytoplasmic side of the membrane.

Belongs to the glycosyltransferase 2 family.

It localises to the cell inner membrane. It catalyses the reaction UDP-4-deoxy-4-formamido-beta-L-arabinose + di-trans,octa-cis-undecaprenyl phosphate = 4-deoxy-4-formamido-alpha-L-arabinopyranosyl di-trans,octa-cis-undecaprenyl phosphate + UDP. The protein operates within glycolipid biosynthesis; 4-amino-4-deoxy-alpha-L-arabinose undecaprenyl phosphate biosynthesis; 4-amino-4-deoxy-alpha-L-arabinose undecaprenyl phosphate from UDP-4-deoxy-4-formamido-beta-L-arabinose and undecaprenyl phosphate: step 1/2. Its pathway is bacterial outer membrane biogenesis; lipopolysaccharide biosynthesis. In terms of biological role, catalyzes the transfer of 4-deoxy-4-formamido-L-arabinose from UDP to undecaprenyl phosphate. The modified arabinose is attached to lipid A and is required for resistance to polymyxin and cationic antimicrobial peptides. This Salmonella choleraesuis (strain SC-B67) protein is Undecaprenyl-phosphate 4-deoxy-4-formamido-L-arabinose transferase.